The following is a 261-amino-acid chain: MSRKPLIAGNWKMNLNHFEAIALVQKIAFSLPDKYFDKVDVTVIPPFTDLRSVQTLVDGDKLRLTYGAQDVSQHDSGAYTGEISGAFLAKLGCTFAVVGHSERRTYHNEDDALVAAKAAAAFKHGLTPIICIGEHLDVREAGNHVEYNVNQLRGSLAGLSAEQIGQAVIAYEPVWAIGTGRVASAADAQEVCKAIRDELGNLASPELAAGVRVLYGGSVNAKNVGEIVGQADVDGALVGGASLDGEQFSMLSAIAAGGPLP.

Substrate is bound at residue 10-12 (NWK). H100 functions as the Electrophile in the catalytic mechanism. The Proton acceptor role is filled by E172. Residues G178, S218, and 239–240 (GG) each bind substrate.

The protein belongs to the triosephosphate isomerase family. Homodimer.

The protein resides in the cytoplasm. It catalyses the reaction D-glyceraldehyde 3-phosphate = dihydroxyacetone phosphate. Its pathway is carbohydrate biosynthesis; gluconeogenesis. It functions in the pathway carbohydrate degradation; glycolysis; D-glyceraldehyde 3-phosphate from glycerone phosphate: step 1/1. Its function is as follows. Involved in the gluconeogenesis. Catalyzes stereospecifically the conversion of dihydroxyacetone phosphate (DHAP) to D-glyceraldehyde-3-phosphate (G3P). This Mycolicibacterium vanbaalenii (strain DSM 7251 / JCM 13017 / BCRC 16820 / KCTC 9966 / NRRL B-24157 / PYR-1) (Mycobacterium vanbaalenii) protein is Triosephosphate isomerase.